Here is a 262-residue protein sequence, read N- to C-terminus: Linker for activation of T-cells family member 1 (262 aa).

The Extracellular portion of the chain corresponds to 1 to 4 (MEEA). Residues 5-27 (ILVPCVLGLLLLPILAMLMALCV) traverse the membrane as a helical; Signal-anchor for type III membrane protein segment. 2 S-palmitoyl cysteine lipidation sites follow: cysteine 26 and cysteine 29. Residues 28 to 262 (HCHRLPGSYD…PDYENLQELN (235 aa)) are Cytoplasmic-facing. Threonine 39 is subject to Phosphothreonine. Residues serine 40, serine 41, serine 43, serine 84, serine 101, serine 106, and serine 109 each carry the phosphoserine modification. Residues 69-115 (SYPPLSQPDLLPIPRSPQPLGGSHRTPSSRRDSDGANSVASYENEGA) form a disordered region. Residues tyrosine 110, tyrosine 156, tyrosine 161, tyrosine 200, and tyrosine 220 each carry the phosphotyrosine modification. The interval 161–164 (YLVV) is interaction with PLCG1. 2 interaction with GRB2, GRAP2 and PIK3R1 regions span residues 200 to 203 (YVNV) and 220 to 223 (YVNV). Positions 206–262 (SGESAEASLDGSREYVNVSQELHPGAAKTEPAALSSQEAEEVEEEGAPDYENLQELN) are disordered. A phosphoserine mark is found at serine 224, serine 240, and serine 241. A compositionally biased stretch (acidic residues) spans 243 to 253 (EAEEVEEEGAP). Position 255 is a phosphotyrosine (tyrosine 255).

In terms of assembly, when phosphorylated, interacts directly with the PIK3R1 subunit of phosphoinositide 3-kinase and the SH2 domains of GRB2, GRAP, GRAP2, PLCG1 and PLCG2. Interacts indirectly with CBL, SOS, VAV, and LCP2. Interacts with SHB, SKAP2 and CLNK. Interacts with FCGR1A. Interacts with GRB2, PLCG1 and THEMIS upon TCR activation in thymocytes. Interacts with THEMIS2. As to quaternary structure, (Microbial infection) Interacts with herpes virus 1/HHV-1 protein US3; this interaction prevents the interaction between LAT and TRAF6. In terms of processing, phosphorylated on tyrosines by ZAP70 upon TCR activation, or by SYK upon other immunoreceptor activation; which leads to the recruitment of multiple signaling molecules. Is one of the most prominently tyrosine-phosphorylated proteins detected following TCR engagement. May be dephosphorylated by PTPRJ. Phosphorylated by ITK leading to the recruitment of VAV1 to LAT-containing complexes. Palmitoylation of Cys-26 and Cys-29 is required for raft targeting and efficient phosphorylation. Post-translationally, 'Lys-63'-linked ubiquitinated by TRAF6. Expressed in thymus, T-cells, NK cells, mast cells and, at lower levels, in spleen. Present in T-cells but not B-cells (at protein level).

The protein resides in the cell membrane. Its function is as follows. Required for TCR (T-cell antigen receptor)- and pre-TCR-mediated signaling, both in mature T-cells and during their development. Involved in FCGR3 (low affinity immunoglobulin gamma Fc region receptor III)-mediated signaling in natural killer cells and FCER1 (high affinity immunoglobulin epsilon receptor)-mediated signaling in mast cells. Couples activation of these receptors and their associated kinases with distal intracellular events such as mobilization of intracellular calcium stores, PKC activation, MAPK activation or cytoskeletal reorganization through the recruitment of PLCG1, GRB2, GRAP2, and other signaling molecules. This Homo sapiens (Human) protein is Linker for activation of T-cells family member 1 (LAT).